Consider the following 412-residue polypeptide: Transforming growth factor beta-3 proprotein (412 aa).

The N-terminal stretch at 1–23 is a signal peptide; sequence MKMHLQRALVVLALLNFATVSLS. Residues N74, N135, and N142 are each glycosylated (N-linked (GlcNAc...) asparagine). The Cell attachment site signature appears at 261–263; the sequence is RGD. At Q293 the chain carries N5-methylglutamine. Intrachain disulfides connect C307-C316, C315-C378, C344-C409, and C348-C411.

The protein belongs to the TGF-beta family. As to quaternary structure, interacts with ASPN. Latency-associated peptide: Homodimer; disulfide-linked. Latency-associated peptide: Interacts with Transforming growth factor beta-3 (TGF-beta-3) chain; interaction is non-covalent and maintains (TGF-beta-3) in a latent state. Latency-associated peptide: Interacts with LRRC32/GARP; leading to regulate activation of TGF-beta-3 and promote epithelial fusion during palate development. Latency-associated peptide: Interacts (via cell attachment site) with integrins, leading to release of the active TGF-beta-3. Transforming growth factor beta-3: Homodimer; disulfide-linked. Transforming growth factor beta-3: Interacts with TGF-beta receptors (TGFBR1 and TGFBR2), leading to signal transduction. Transforming growth factor beta-3 proprotein: The precursor proprotein is cleaved in the Golgi apparatus to form Transforming growth factor beta-3 (TGF-beta-3) and Latency-associated peptide (LAP) chains, which remain non-covalently linked, rendering TGF-beta-3 inactive. In terms of processing, methylated at Gln-293 by N6AMT1.

Its subcellular location is the secreted. It is found in the extracellular space. The protein resides in the extracellular matrix. Transforming growth factor beta-3 proprotein: Precursor of the Latency-associated peptide (LAP) and Transforming growth factor beta-3 (TGF-beta-3) chains, which constitute the regulatory and active subunit of TGF-beta-3, respectively. Functionally, required to maintain the Transforming growth factor beta-3 (TGF-beta-3) chain in a latent state during storage in extracellular matrix. Associates non-covalently with TGF-beta-3 and regulates its activation via interaction with 'milieu molecules', such as LTBP1 and LRRC32/GARP, that control activation of TGF-beta-3. Interaction with integrins results in distortion of the Latency-associated peptide chain and subsequent release of the active TGF-beta-3. Its function is as follows. Transforming growth factor beta-3: Multifunctional protein that regulates embryogenesis and cell differentiation and is required in various processes such as secondary palate development. Activation into mature form follows different steps: following cleavage of the proprotein in the Golgi apparatus, Latency-associated peptide (LAP) and Transforming growth factor beta-3 (TGF-beta-3) chains remain non-covalently linked rendering TGF-beta-3 inactive during storage in extracellular matrix. At the same time, LAP chain interacts with 'milieu molecules', such as LTBP1 and LRRC32/GARP that control activation of TGF-beta-3 and maintain it in a latent state during storage in extracellular milieus. TGF-beta-3 is released from LAP by integrins: integrin-binding results in distortion of the LAP chain and subsequent release of the active TGF-beta-3. Once activated following release of LAP, TGF-beta-3 acts by binding to TGF-beta receptors (TGFBR1 and TGFBR2), which transduce signal. In Homo sapiens (Human), this protein is Transforming growth factor beta-3 proprotein (TGFB3).